Here is a 201-residue protein sequence, read N- to C-terminus: MVFIADYGAGNLRSVLKAFEFLGIKAIVSNDPRKMAGYRKVLLPGVGAFGQAMQSLEALGFVSALLEHVDKGGHLLGICLGMQLLLSESEEMGTHKGLNLVPGKVKHFVSSSDKIPQIGWNAVDFSKQSDLFRNVADHSFFYFVHSYYCETESVEAVAATTLFAGQNFCSAIEKNGIFAVQFHPEKSADAGLKVLANFAEL.

In terms of domain architecture, Glutamine amidotransferase type-1 spans 1-201 (MVFIADYGAG…LKVLANFAEL (201 aa)). Residue cysteine 79 is the Nucleophile of the active site. Active-site residues include histidine 183 and glutamate 185.

In terms of assembly, heterodimer of HisH and HisF.

Its subcellular location is the cytoplasm. The enzyme catalyses 5-[(5-phospho-1-deoxy-D-ribulos-1-ylimino)methylamino]-1-(5-phospho-beta-D-ribosyl)imidazole-4-carboxamide + L-glutamine = D-erythro-1-(imidazol-4-yl)glycerol 3-phosphate + 5-amino-1-(5-phospho-beta-D-ribosyl)imidazole-4-carboxamide + L-glutamate + H(+). It carries out the reaction L-glutamine + H2O = L-glutamate + NH4(+). Its pathway is amino-acid biosynthesis; L-histidine biosynthesis; L-histidine from 5-phospho-alpha-D-ribose 1-diphosphate: step 5/9. In terms of biological role, IGPS catalyzes the conversion of PRFAR and glutamine to IGP, AICAR and glutamate. The HisH subunit catalyzes the hydrolysis of glutamine to glutamate and ammonia as part of the synthesis of IGP and AICAR. The resulting ammonia molecule is channeled to the active site of HisF. This Chlorobium chlorochromatii (strain CaD3) protein is Imidazole glycerol phosphate synthase subunit HisH.